Here is a 177-residue protein sequence, read N- to C-terminus: uncharacterized protein (177 aa).

This is an uncharacterized protein from Azotobacter chroococcum mcd 1.